We begin with the raw amino-acid sequence, 511 residues long: Ribose import ATP-binding protein RbsA 3 (511 aa).

2 consecutive ABC transporter domains span residues 21-257 (LEMR…VGRD) and 256-511 (RDVE…TGNA). 53–60 (GENGAGKS) is a binding site for ATP.

The protein belongs to the ABC transporter superfamily. Ribose importer (TC 3.A.1.2.1) family. In terms of assembly, the complex is composed of an ATP-binding protein (RbsA), two transmembrane proteins (RbsC) and a solute-binding protein (RbsB).

It localises to the cell inner membrane. It carries out the reaction D-ribose(out) + ATP + H2O = D-ribose(in) + ADP + phosphate + H(+). Functionally, part of the ABC transporter complex RbsABC involved in ribose import. Responsible for energy coupling to the transport system. This Rhizobium etli (strain ATCC 51251 / DSM 11541 / JCM 21823 / NBRC 15573 / CFN 42) protein is Ribose import ATP-binding protein RbsA 3.